The following is a 381-amino-acid chain: CCN family member 1 (381 aa).

The first 24 residues, 1-24 (MSSRIARALALVVTLLHLTRLALS), serve as a signal peptide directing secretion. One can recognise an IGFBP N-terminal domain in the interval 25–94 (TCPAACHCPL…TALKGICRAQ (70 aa)). Intrachain disulfides connect Cys-26–Cys-50, Cys-30–Cys-52, Cys-32–Cys-53, Cys-39–Cys-56, Cys-64–Cys-78, and Cys-70–Cys-91. The 67-residue stretch at 98–164 (RPCEYNSRIY…GQCCEEWVCD (67 aa)) folds into the VWFC domain. Phosphoserine is present on Ser-188. In terms of domain architecture, TSP type-1 spans 228 to 273 (KCIVQTTSWSQCSKTCGTGISTRVTNDNPECRLVKETRICEVRPCG). The heparin-binding stretch occupies residues 279-315 (SLKKGKKCSKTKKSPEPVRFTYAGCLSVKKYRPKYCG). 5 disulfides stabilise this stretch: Cys-286-Cys-323, Cys-303-Cys-337, Cys-314-Cys-353, Cys-317-Cys-355, and Cys-322-Cys-359. The 75-residue stretch at 286–360 (CSKTKKSPEP…QSCKCNYNCP (75 aa)) folds into the CTCK domain.

The protein belongs to the CCN family. As to quaternary structure, interaction with integrins is heparin- and cell-type-dependent and promotes cell adhesion.

The protein localises to the secreted. In terms of biological role, promotes cell proliferation, chemotaxis, angiogenesis and cell adhesion. Appears to play a role in wound healing by up-regulating, in skin fibroblasts, the expression of a number of genes involved in angiogenesis, inflammation and matrix remodeling including VEGA-A, VEGA-C, MMP1, MMP3, TIMP1, uPA, PAI-1 and integrins alpha-3 and alpha-5. CCN1-mediated gene regulation is dependent on heparin-binding. Down-regulates the expression of alpha-1 and alpha-2 subunits of collagen type-1. Promotes cell adhesion and adhesive signaling through integrin alpha-6/beta-1, cell migration through integrin alpha-1/beta-5 and cell proliferation through integrin alpha-v/beta-3. This chain is CCN family member 1 (CCN1), found in Pan troglodytes (Chimpanzee).